The following is a 126-amino-acid chain: Large ribosomal subunit protein bL20c (126 aa).

Belongs to the bacterial ribosomal protein bL20 family.

Its subcellular location is the plastid. It is found in the chloroplast. Its function is as follows. Binds directly to 23S ribosomal RNA and is necessary for the in vitro assembly process of the 50S ribosomal subunit. It is not involved in the protein synthesizing functions of that subunit. This Illicium oligandrum (Star anise) protein is Large ribosomal subunit protein bL20c.